A 69-amino-acid chain; its full sequence is Large ribosomal subunit protein bL31 (69 aa).

Zn(2+) contacts are provided by Cys16, Cys18, Cys37, and Cys40.

It belongs to the bacterial ribosomal protein bL31 family. Type A subfamily. In terms of assembly, part of the 50S ribosomal subunit. Requires Zn(2+) as cofactor.

In terms of biological role, binds the 23S rRNA. The protein is Large ribosomal subunit protein bL31 of Teredinibacter turnerae (strain ATCC 39867 / T7901).